We begin with the raw amino-acid sequence, 402 residues long: Putative RNA-guided DNA endonuclease (402 aa).

Aspartate 188 is a catalytic residue. The interval 202–239 is disordered; it reads KITNPKHERRDRARLAKAQRDVSRKAKGSANRKKARRK. Residues 204–225 show a composition bias toward basic and acidic residues; sequence TNPKHERRDRARLAKAQRDVSR. The span at 226 to 239 shows a compositional bias: basic residues; the sequence is KAKGSANRKKARRK. Glutamate 272 is a catalytic residue. Positions 325, 328, 344, and 346 each coordinate Zn(2+). Aspartate 353 is a catalytic residue. The disordered stretch occupies residues 373-402; sequence GIRPQRESSRTGRSSVKQEPQRATAGIPRL.

It in the N-terminal section; belongs to the transposase 2 family. In the C-terminal section; belongs to the transposase 35 family.

An RNA-guided dsDNA endonuclease. When guided by an RNA derived from the right-end element of its insertion sequence element (IS), cleaves DNA downstream of the transposon-associated motif (TAM). Cleaves supercoiled and linear DNA in a staggered manner 15-21 bases from the TAM yielding 5'-overhangs. Binds reRNA, an approximately 150 nucleotide base sRNA derived from the 3' end of its own gene, the right end (RE) of the insertion sequence (IS) plus sequence downstream of the IS. The chain is Putative RNA-guided DNA endonuclease from Streptomyces pristinaespiralis.